Reading from the N-terminus, the 348-residue chain is Sensor protein VraS (348 aa).

The next 2 helical transmembrane spans lie at 13-33 (ILVYSMLIAFLFIDKVFVNII) and 43-63 (IFGIPVFLFLNLLIVLLCIIV). Residues 150–341 (RLARELHDSV…RIEVKAPLNK (192 aa)) form the Histidine kinase domain.

The protein resides in the cell membrane. It carries out the reaction ATP + protein L-histidine = ADP + protein N-phospho-L-histidine.. In terms of biological role, member of the two-component regulatory system VraS/VraR involved in the control of the cell wall peptidoglycan biosynthesis. Probably activates VraR by phosphorylation. This Staphylococcus epidermidis (strain ATCC 35984 / DSM 28319 / BCRC 17069 / CCUG 31568 / BM 3577 / RP62A) protein is Sensor protein VraS (vraS).